A 121-amino-acid polypeptide reads, in one-letter code: Phospholipase A2 homolog ECO_00035 (121 aa).

Disulfide bonds link Cys25-Cys114, Cys27-Cys43, Cys42-Cys94, Cys48-Cys121, Cys49-Cys87, Cys56-Cys80, and Cys74-Cys85. Residues 104–116 (KKYKIYPNILCRG) form an important for membrane-damaging activities in eukaryotes and bacteria; heparin-binding region.

The protein belongs to the phospholipase A2 family. Group II subfamily. S49 sub-subfamily. Monomer. As to expression, expressed by the venom gland.

Its subcellular location is the secreted. Functionally, snake venom phospholipase A2 homolog that lacks enzymatic activity. Shows high myotoxin activities and displays edema-inducing activities. Has cytotoxic activities against HUVEC cells (LC(50)=4.9 uL) and human lung adenocarcinoma A549 cells (LC(50)=3.5 uL). This chain is Phospholipase A2 homolog ECO_00035, found in Echis coloratus (Carpet viper).